The following is a 366-amino-acid chain: Methyltransferase phm5 (366 aa).

S-adenosyl-L-methionine contacts are provided by residues 204 to 205 (GG), Asp230, 255 to 256 (SM), Arg273, and Arg274.

This sequence belongs to the class I-like SAM-binding methyltransferase superfamily. Cation-independent O-methyltransferase family.

It functions in the pathway secondary metabolite biosynthesis. In terms of biological role, methyltransferase; part of the gene cluster that mediates the biosynthesis of the trans-fused decalin-containing tetramic acid phomasetin, the stereochemical opposite of the HIV-1 integrase inhibitor equisetin. The PKS module of phm1 together with the enoylreductase phm4 catalyze the formation of the polyketide unit which is then conjugated to L-serine by the condensation domain of the phm1 NRPS module. Activity of the Dieckmann cyclase domain (RED) of phm1 results in release of the Dieckmann product intermediate. The Diels-Alderase phm7 then uses the Dieckmann product of phm1 as substrate and catalyzes the Diels-Alder cycloaddition to form the decalin ring of N-desmethylphomasetin. N-desmethylphomasetin is further methylated to phomasetin by the methyltransferase phm5. This Pyrenochaetopsis sp protein is Methyltransferase phm5.